We begin with the raw amino-acid sequence, 314 residues long: 4-hydroxy-3-methylbut-2-enyl diphosphate reductase (314 aa).

Position 12 (cysteine 12) interacts with [4Fe-4S] cluster. Positions 43 and 81 each coordinate (2E)-4-hydroxy-3-methylbut-2-enyl diphosphate. Dimethylallyl diphosphate is bound by residues histidine 43 and histidine 81. Residues histidine 43 and histidine 81 each coordinate isopentenyl diphosphate. Cysteine 103 is a binding site for [4Fe-4S] cluster. (2E)-4-hydroxy-3-methylbut-2-enyl diphosphate is bound at residue histidine 131. Residue histidine 131 participates in dimethylallyl diphosphate binding. Histidine 131 is a binding site for isopentenyl diphosphate. Catalysis depends on glutamate 133, which acts as the Proton donor. A (2E)-4-hydroxy-3-methylbut-2-enyl diphosphate-binding site is contributed by threonine 170. [4Fe-4S] cluster is bound at residue cysteine 198. Positions 226, 228, and 271 each coordinate (2E)-4-hydroxy-3-methylbut-2-enyl diphosphate. Residues serine 226, asparagine 228, and serine 271 each contribute to the dimethylallyl diphosphate site. Residues serine 226, asparagine 228, and serine 271 each coordinate isopentenyl diphosphate.

This sequence belongs to the IspH family. [4Fe-4S] cluster serves as cofactor.

The enzyme catalyses isopentenyl diphosphate + 2 oxidized [2Fe-2S]-[ferredoxin] + H2O = (2E)-4-hydroxy-3-methylbut-2-enyl diphosphate + 2 reduced [2Fe-2S]-[ferredoxin] + 2 H(+). It catalyses the reaction dimethylallyl diphosphate + 2 oxidized [2Fe-2S]-[ferredoxin] + H2O = (2E)-4-hydroxy-3-methylbut-2-enyl diphosphate + 2 reduced [2Fe-2S]-[ferredoxin] + 2 H(+). It participates in isoprenoid biosynthesis; dimethylallyl diphosphate biosynthesis; dimethylallyl diphosphate from (2E)-4-hydroxy-3-methylbutenyl diphosphate: step 1/1. Its pathway is isoprenoid biosynthesis; isopentenyl diphosphate biosynthesis via DXP pathway; isopentenyl diphosphate from 1-deoxy-D-xylulose 5-phosphate: step 6/6. Functionally, catalyzes the conversion of 1-hydroxy-2-methyl-2-(E)-butenyl 4-diphosphate (HMBPP) into a mixture of isopentenyl diphosphate (IPP) and dimethylallyl diphosphate (DMAPP). Acts in the terminal step of the DOXP/MEP pathway for isoprenoid precursor biosynthesis. This chain is 4-hydroxy-3-methylbut-2-enyl diphosphate reductase, found in Bacillus velezensis (strain DSM 23117 / BGSC 10A6 / LMG 26770 / FZB42) (Bacillus amyloliquefaciens subsp. plantarum).